Here is a 58-residue protein sequence, read N- to C-terminus: Large ribosomal subunit protein uL30 (58 aa).

Belongs to the universal ribosomal protein uL30 family. As to quaternary structure, part of the 50S ribosomal subunit.

The polypeptide is Large ribosomal subunit protein uL30 (Parabacteroides distasonis (strain ATCC 8503 / DSM 20701 / CIP 104284 / JCM 5825 / NCTC 11152)).